The primary structure comprises 1527 residues: MRFMLLMLQLLGLLLLLAGGVQSVYCPAGCTCLERTVRCIRAKLSAVPKLPQDTQTLDLRFNHIEELPANAFSGLAQLTTLFLNDNELAYLQDGALNGLTALRFVYLNNNRLSRLPATIFQRMPRLEAIFLENNDIWQLPAGLFDNLPRLNRLIMYNNKLTQLPVDGFNRLNNLKRLRLDGNAIDCNCGVYSLWRRWHLDVQRQLVSISLTCAAPQMLQNQGFSSLGEHHFKCAKPQFLVAPQDAQVAAGEQVELSCEVTGLPRPQITWMHNTQELGLEEQAQAEILPSGSLLIRSADTSDMGIYQCIARNEMGALRSQPVRLVVNGGNHPLDSPIDARSNQVWADAGTPMHGATPLPSPLPSPPHFTHQPHDQIVALHGSGHVLLDCAASGWPQPDIQWFVNGRQLLQSTPSLQLQANGSLILLQPNQLSAGTYRCEARNSLGSVQATARIELKELPEILTAPQSQTIKLGKAFVLECDADGNPLPTIDWQLNGVPLPGNTPDLQLENENTELVVGAARQEHAGVYRCTAHNENGETSVEATIKVERSQSPPQLAIEPSNLVAITGTTIELPCQADQPEDGLQISWRHDGRLIDPNVQLAEKYQISGAGSLFVKNVTIPDGGRYECQLKNQFGRASASALVTIRNNVDLAPGDRYVRIAFAEAAKEIDLAINNTLDMLFSNRSDKAPPNYGELLRVFRFPTGEARQLARAAEIYERTLVNIRKHVQEGDNLTMKSEEYEFRDLLSREHLHLVAELSGCMEHREMPNCTDMCFHSRYRSIDGTCNNLQHPTWGASLTAFRRLAPPIYENGFSMPVGWTKGMLYSGHAKPSARLVSTSLVATKEITPDARITHMVMQWGQFLDHDLDHAIPSVSSESWDGIDCKKSCEMAPPCYPIEVPPNDPRVRNRRCIDVVRSSAICGSGMTSLFFDSVQHREQINQLTSYIDASQVYGYSTAFAQELRNLTSQEGLLRVGVHFPRQKDMLPFAAPQDGMDCRRNLDENTMSCFVSGDIRVNEQVGLLAMHTIWMREHNRIASKLKQINSHWDGDTLYQEARKIVGAQMQHITFKQWLPLIIGESGMEMMGEYQGYNPQLNPSIANEFATAALRFGHTIINPILHRLNETFQPIPQGHLLLHKAFFAPWRLAYEGGVDPLMRGFLAVPAKLKTPDQNLNTELTEKLFQTAHAVALDLAAINIQRGRDHGMPGYNVYRKLCNLTVAQDFEDLAGEISSAEIRQKMKELYGHPDNVDVWLGGILEDQVEGGKVGPLFQCLLVEQFRRLRDGDRLYYENPGVFSPEQLTQIKQANFGRVLCDVGDNFDQVTENVFILAKHQGGYKKCEDIIGINLYLWQECGRCNSPPAIFDSYIPQTYTKRSNRQKRDLGKENDEVATAESYDSPLESLYDVNEERVSGLEELIGSFQKELKKLHKKLRKLEDSCNSADSEPVAQVVQLAAAPPQLVSKPKRSHCVDDKGTTRLNNEVWSPDVCTKCNCFHGQVNCLRERCGEVSCPPGVDPLTPPEACCPHCPMVK.

Positions 1–23 are cleaved as a signal peptide; it reads MRFMLLMLQLLGLLLLLAGGVQS. The region spanning 24 to 53 is the LRRNT domain; it reads VYCPAGCTCLERTVRCIRAKLSAVPKLPQD. 6 LRR repeats span residues 51-74, 75-98, 99-122, 124-146, 147-170, and 172-196; these read PQDT…AFSG, LAQL…ALNG, LTAL…IFQR, PRLE…LFDN, LPRL…GFNR, and NNLK…LWRR. Ig-like C2-type domains lie at 236 to 322, 365 to 453, 458 to 545, and 553 to 643; these read PQFL…QPVR, PHFT…ARIE, PEIL…ATIK, and PQLA…ALVT. Intrachain disulfides connect Cys257–Cys307, Cys388–Cys437, Cys479–Cys529, and Cys574–Cys627. Residue Asn419 is glycosylated (N-linked (GlcNAc...) asparagine). 5 N-linked (GlcNAc...) asparagine glycosylation sites follow: Asn616, Asn673, Asn682, Asn731, and Asn767. A disulfide bridge connects residues Cys768 and Cys784. Asp862 provides a ligand contact to heme b. The active-site Proton acceptor is His863. Asp864 lines the Ca(2+) pocket. 2 disulfide bridges follow: Cys882–Cys892 and Cys886–Cys909. 4 residues coordinate Ca(2+): Thr941, Tyr943, Asp945, and Ser947. An N-linked (GlcNAc...) asparagine glycan is attached at Asn962. A disulfide bond links Cys994 and Cys1005. Heme b contacts are provided by Glu1015 and His1109. 2 N-linked (GlcNAc...) asparagine glycosylation sites follow: Asn1120 and Asn1213. Cystine bridges form between Cys1212-Cys1269 and Cys1310-Cys1336. Residues 1403–1441 are a coiled coil; the sequence is NEERVSGLEELIGSFQKELKKLHKKLRKLEDSCNSADSE. Residues 1463–1524 enclose the VWFC domain; the sequence is SHCVDDKGTT…PPEACCPHCP (62 aa).

Belongs to the peroxidase family. XPO subfamily. In terms of assembly, homotrimer; disulfide-linked. Requires Ca(2+) as cofactor. It depends on heme b as a cofactor. In terms of tissue distribution, expressed in hemocytes. Also expressed in the fat body and gastric caeca.

It localises to the secreted. The enzyme catalyses (5R)-5-hydroxy-L-lysyl-[collagen] + L-methionyl-[collagen] + H2O2 = [collagen]-(5R)-5-hydroxy-L-lysyl-N-S-L-methionyl-[collagen] + 2 H2O + H(+). The catalysed reaction is bromide + H2O2 = hypobromite + H2O. It catalyses the reaction (5R)-5-hydroxy-L-lysyl-[collagen] + L-methionyl-[collagen] + hypobromite = [collagen]-(5R)-5-hydroxy-L-lysyl-N-S-L-methionyl-[collagen] + bromide + H2O + H(+). It carries out the reaction L-lysyl-[collagen] + L-methionyl-[collagen] + H2O2 = [collagen]-L-lysyl-N-S-L-methionyl-[collagen] + 2 H2O + H(+). The enzyme catalyses L-lysyl-[collagen] + L-methionyl-[collagen] + hypobromite = [collagen]-L-lysyl-N-S-L-methionyl-[collagen] + bromide + H2O + H(+). The catalysed reaction is L-tyrosyl-[protein] + bromide + H2O2 + H(+) = 3-bromo-L-tyrosyl-[protein] + 2 H2O. It catalyses the reaction hypobromite + L-tyrosyl-[protein] + H(+) = 3-bromo-L-tyrosyl-[protein] + H2O. Its function is as follows. Catalyzes the two-electron oxidation of bromide by hydrogen peroxide and generates hypobromite as a reactive intermediate which mediates the formation of sulfilimine cross-links between methionine and hydroxylysine residues within an uncross-linked collagen IV NC1 hexamer. Plays a role in extracellular matrix consolidation, phagocytosis and defense. This chain is Peroxidasin, found in Drosophila melanogaster (Fruit fly).